A 407-amino-acid chain; its full sequence is Phosphoglycerate kinase (407 aa).

Substrate-binding positions include D21–N23, R36, H59–R62, R116, and R156. Residues E332 and G358–T361 each bind ATP.

It belongs to the phosphoglycerate kinase family. As to quaternary structure, monomer.

It is found in the cytoplasm. The catalysed reaction is (2R)-3-phosphoglycerate + ATP = (2R)-3-phospho-glyceroyl phosphate + ADP. Its pathway is carbohydrate degradation; glycolysis; pyruvate from D-glyceraldehyde 3-phosphate: step 2/5. This chain is Phosphoglycerate kinase, found in Halorubrum lacusprofundi (strain ATCC 49239 / DSM 5036 / JCM 8891 / ACAM 34).